Reading from the N-terminus, the 421-residue chain is Protein MucB (421 aa).

Residues phenylalanine 2 to glycine 187 enclose the UmuC domain.

Belongs to the DNA polymerase type-Y family.

Involved in UV protection and mutation. The sequence is that of Protein MucB (mucB) from Salmonella typhimurium.